The primary structure comprises 444 residues: N-succinylarginine dihydrolase (444 aa).

Substrate is bound by residues 19 to 28 (AGLSFGNVAS), Asn-110, and 137 to 138 (HR). Residue Glu-174 is part of the active site. Residue Arg-214 coordinates substrate. His-250 is an active-site residue. Substrate-binding residues include Asp-252 and Asn-362. Catalysis depends on Cys-368, which acts as the Nucleophile.

Belongs to the succinylarginine dihydrolase family. Homodimer.

The catalysed reaction is N(2)-succinyl-L-arginine + 2 H2O + 2 H(+) = N(2)-succinyl-L-ornithine + 2 NH4(+) + CO2. It functions in the pathway amino-acid degradation; L-arginine degradation via AST pathway; L-glutamate and succinate from L-arginine: step 2/5. Catalyzes the hydrolysis of N(2)-succinylarginine into N(2)-succinylornithine, ammonia and CO(2). The sequence is that of N-succinylarginine dihydrolase from Shewanella denitrificans (strain OS217 / ATCC BAA-1090 / DSM 15013).